We begin with the raw amino-acid sequence, 92 residues long: Mediator-associated protein 3 (92 aa).

A DEK-C domain is found at 13 to 70 (KDLRRKIKKTVKKILESSNLYKITEIKAREEASLKLDLDLSQDPYKVIVKEEVENFLE).

As to quaternary structure, associated with the Mediator complex.

The protein resides in the nucleus. This is Mediator-associated protein 3 from Arabidopsis thaliana (Mouse-ear cress).